The sequence spans 854 residues: Patatin-like phospholipase domain-containing protein CHGG_02900 (854 aa).

Disordered stretches follow at residues 1-29 (MAGPGYDRVDSKDDEPPNIQIPSRTYGFP), 58-138 (LSAP…PPLS), and 159-186 (QRRVARAKTAPQSSSRNDKKKKRARSKD). Positions 96 to 116 (DLARRPESSGVGFHDEDRTAR) are enriched in basic and acidic residues. Positions 119–132 (PAGAATAAAAGVAT) are enriched in low complexity. Residues 199-219 (WPLLGVVTCWLVGLSVVHVLA) form a helical membrane-spanning segment. Residues 387-578 (LCLSGGATFA…RTDIPIKALN (192 aa)) enclose the PNPLA domain. The GXSXG signature appears at 418–422 (GTSGG). Catalysis depends on S420, which acts as the Nucleophile. D565 (proton acceptor) is an active-site residue. Disordered stretches follow at residues 724–776 (RENR…SILS) and 791–830 (RGGIGSGETESEDETSDLDADFYEGITYDGGDDDAGLEFG). Residues 729–751 (GGGLGDGGVGSSGGAGGGAGGGQ) show a composition bias toward gly residues. Residues 752-761 (AEAVAGQAAG) show a composition bias toward low complexity. The span at 799–812 (TESEDETSDLDADF) shows a compositional bias: acidic residues.

The protein belongs to the PLPL family.

It is found in the membrane. Functionally, probable lipid hydrolase. The chain is Patatin-like phospholipase domain-containing protein CHGG_02900 from Chaetomium globosum (strain ATCC 6205 / CBS 148.51 / DSM 1962 / NBRC 6347 / NRRL 1970) (Soil fungus).